Consider the following 396-residue polypeptide: Elongation factor Tu 2 (396 aa).

The tr-type G domain maps to 10–206; the sequence is KPHVNIGTIG…AVDEYIPTPE (197 aa). Residues 19–26 form a G1 region; sequence GHVDHGKT. GTP is bound at residue 19-26; the sequence is GHVDHGKT. Residue threonine 26 coordinates Mg(2+). The tract at residues 60 to 64 is G2; it reads GITIN. Positions 81–84 are G3; sequence DCPG. GTP contacts are provided by residues 81 to 85 and 136 to 139; these read DCPGH and NKVD. The interval 136–139 is G4; the sequence is NKVD. The tract at residues 174-176 is G5; the sequence is SAL.

Belongs to the TRAFAC class translation factor GTPase superfamily. Classic translation factor GTPase family. EF-Tu/EF-1A subfamily. As to quaternary structure, monomer.

The protein localises to the cytoplasm. It carries out the reaction GTP + H2O = GDP + phosphate + H(+). Its function is as follows. GTP hydrolase that promotes the GTP-dependent binding of aminoacyl-tRNA to the A-site of ribosomes during protein biosynthesis. This Hyphomonas neptunium (strain ATCC 15444) protein is Elongation factor Tu 2.